The following is a 250-amino-acid chain: Histone H1.2 (250 aa).

Positions 1–11 (MSDSAVATSAS) are enriched in polar residues. Disordered stretches follow at residues 1 to 53 (MSDS…QMVD) and 101 to 250 (KLIQ…ATKK). Positions 27-42 (KKAAATPKSKKSTAAP) are enriched in low complexity. Residues 44–118 (SHPPTQQMVD…GASGSFKLSR (75 aa)) form the H15 domain. The segment covering 120–133 (AKKDPKPKASAVEK) has biased composition (basic and acidic residues). Positions 151–161 (STSTTKKAAGA) are enriched in low complexity. Over residues 174–191 (KSVEKKRADKAKAKDAKK) the composition is skewed to basic and acidic residues. The span at 192–211 (TGTIKAKPTTAKAKSSATKP) shows a compositional bias: low complexity. Basic residues-rich tracts occupy residues 212–225 (KTPKPKTKSAKPKK) and 235–250 (TAVKKPKAKTASATKK).

The protein belongs to the histone H1/H5 family.

It is found in the nucleus. The protein resides in the chromosome. Histones H1 are necessary for the condensation of nucleosome chains into higher-order structures. This Drosophila virilis (Fruit fly) protein is Histone H1.2 (His1.2).